We begin with the raw amino-acid sequence, 293 residues long: Deubiquitinase OTUD6B (293 aa).

Disordered regions lie at residues 1-43 (MEEV…RRKQ) and 57-114 (QKHE…LEKE). The region spanning 147 to 284 (LQIKEISSDG…GEHYNSVEPL (138 aa)) is the OTU domain. The tract at residues 152-158 (ISSDGHC) is cys-loop. Asp155 is an active-site residue. Residue Cys158 is the Nucleophile of the active site. The tract at residues 219–229 (VADTAAWGGQL) is variable-loop. The segment at 267 to 277 (YMRHAYGLGEH) is his-loop. His277 is an active-site residue.

It carries out the reaction Thiol-dependent hydrolysis of ester, thioester, amide, peptide and isopeptide bonds formed by the C-terminal Gly of ubiquitin (a 76-residue protein attached to proteins as an intracellular targeting signal).. Functionally, deubiquitinating enzyme that may play a role in the ubiquitin-dependent regulation of different cellular processes. The polypeptide is Deubiquitinase OTUD6B (otud6b) (Danio rerio (Zebrafish)).